Reading from the N-terminus, the 274-residue chain is Siroheme biosynthesis protein MET8 (274 aa).

NAD(+) contacts are provided by residues 23 to 24, 43 to 45, and Phe93; these read EV and SPD. Catalysis depends on Asp141, which acts as the Proton acceptor.

Belongs to the precorrin-2 dehydrogenase / sirohydrochlorin ferrochelatase family. MET8 subfamily. In terms of assembly, homodimer.

It carries out the reaction precorrin-2 + NAD(+) = sirohydrochlorin + NADH + 2 H(+). The enzyme catalyses siroheme + 2 H(+) = sirohydrochlorin + Fe(2+). The protein operates within porphyrin-containing compound metabolism; siroheme biosynthesis; siroheme from sirohydrochlorin: step 1/1. It participates in porphyrin-containing compound metabolism; siroheme biosynthesis; sirohydrochlorin from precorrin-2: step 1/1. In terms of biological role, catalyzes the conversion of precorrin-2 into siroheme. This reaction consist of the NAD-dependent oxidation of precorrin-2 into sirohydrochlorin and its subsequent ferrochelation into siroheme. This is Siroheme biosynthesis protein MET8 from Saccharomyces cerevisiae (strain ATCC 204508 / S288c) (Baker's yeast).